A 1265-amino-acid polypeptide reads, in one-letter code: 5-oxoprolinase (1265 aa).

The protein belongs to the oxoprolinase family. In terms of assembly, homodimer.

The protein resides in the cytoplasm. The protein localises to the cytosol. The enzyme catalyses 5-oxo-L-proline + ATP + 2 H2O = L-glutamate + ADP + phosphate + H(+). Functionally, catalyzes the cleavage of 5-oxo-L-proline to form L-glutamate coupled to the hydrolysis of ATP to ADP and inorganic phosphate. This is 5-oxoprolinase (oplah) from Dictyostelium discoideum (Social amoeba).